A 359-amino-acid polypeptide reads, in one-letter code: Phospho-N-acetylmuramoyl-pentapeptide-transferase (359 aa).

10 consecutive transmembrane segments (helical) span residues 27–47, 71–91, 93–113, 134–154, 170–190, 203–223, 234–254, 262–282, 286–306, and 336–356; these read IGAA…FIRT, VPTM…LLWA, LDNP…MIGA, LLLQ…HPGY, LGWF…NAVN, MVVS…VVLA, SGEL…FLWF, FMGD…AIII, FLLA…MLQV, and KVVV…IATL.

This sequence belongs to the glycosyltransferase 4 family. MraY subfamily. Mg(2+) is required as a cofactor.

The protein resides in the cell inner membrane. The enzyme catalyses UDP-N-acetyl-alpha-D-muramoyl-L-alanyl-gamma-D-glutamyl-meso-2,6-diaminopimeloyl-D-alanyl-D-alanine + di-trans,octa-cis-undecaprenyl phosphate = di-trans,octa-cis-undecaprenyl diphospho-N-acetyl-alpha-D-muramoyl-L-alanyl-D-glutamyl-meso-2,6-diaminopimeloyl-D-alanyl-D-alanine + UMP. It participates in cell wall biogenesis; peptidoglycan biosynthesis. Functionally, catalyzes the initial step of the lipid cycle reactions in the biosynthesis of the cell wall peptidoglycan: transfers peptidoglycan precursor phospho-MurNAc-pentapeptide from UDP-MurNAc-pentapeptide onto the lipid carrier undecaprenyl phosphate, yielding undecaprenyl-pyrophosphoryl-MurNAc-pentapeptide, known as lipid I. This chain is Phospho-N-acetylmuramoyl-pentapeptide-transferase, found in Desulfotalea psychrophila (strain LSv54 / DSM 12343).